The following is a 209-amino-acid chain: Small ribosomal subunit protein uS5 (209 aa).

One can recognise an S5 DRBM domain in the interval 48-111 (LEDEVLDINM…DAAKLNITYI (64 aa)).

The protein belongs to the universal ribosomal protein uS5 family. Part of the 30S ribosomal subunit. Contacts protein S4.

In terms of biological role, with S4 and S12 plays an important role in translational accuracy. The sequence is that of Small ribosomal subunit protein uS5 from Methanosarcina mazei (strain ATCC BAA-159 / DSM 3647 / Goe1 / Go1 / JCM 11833 / OCM 88) (Methanosarcina frisia).